The chain runs to 231 residues: NADH-ubiquinone oxidoreductase chain 4 (231 aa).

The next 6 helical transmembrane spans lie at 1-21 (PIAG…YGII), 34-54 (MFLP…LTCL), 63-85 (IAYS…TPWG), 89-111 (AMAL…NTTY), 128-148 (ILPM…ATPP), and 156-176 (LLIM…LGLS).

Belongs to the complex I subunit 4 family.

It is found in the mitochondrion membrane. It catalyses the reaction a ubiquinone + NADH + 5 H(+)(in) = a ubiquinol + NAD(+) + 4 H(+)(out). Functionally, core subunit of the mitochondrial membrane respiratory chain NADH dehydrogenase (Complex I) that is believed to belong to the minimal assembly required for catalysis. Complex I functions in the transfer of electrons from NADH to the respiratory chain. The immediate electron acceptor for the enzyme is believed to be ubiquinone. This is NADH-ubiquinone oxidoreductase chain 4 (MT-ND4) from Bothriechis lateralis (Side-striped palm pitviper).